The primary structure comprises 267 residues: Pyrroline-5-carboxylate reductase (267 aa).

The protein belongs to the pyrroline-5-carboxylate reductase family.

It is found in the cytoplasm. The enzyme catalyses L-proline + NADP(+) = (S)-1-pyrroline-5-carboxylate + NADPH + 2 H(+). It carries out the reaction L-proline + NAD(+) = (S)-1-pyrroline-5-carboxylate + NADH + 2 H(+). The protein operates within amino-acid biosynthesis; L-proline biosynthesis; L-proline from L-glutamate 5-semialdehyde: step 1/1. In terms of biological role, catalyzes the reduction of 1-pyrroline-5-carboxylate (PCA) to L-proline. This is Pyrroline-5-carboxylate reductase from Synechocystis sp. (strain ATCC 27184 / PCC 6803 / Kazusa).